The following is a 507-amino-acid chain: Probable cytosol aminopeptidase (507 aa).

Residues K271 and D276 each contribute to the Mn(2+) site. K283 is an active-site residue. Mn(2+) contacts are provided by D294, D353, and E355. Residue R357 is part of the active site.

The protein belongs to the peptidase M17 family. Mn(2+) serves as cofactor.

The protein resides in the cytoplasm. The catalysed reaction is Release of an N-terminal amino acid, Xaa-|-Yaa-, in which Xaa is preferably Leu, but may be other amino acids including Pro although not Arg or Lys, and Yaa may be Pro. Amino acid amides and methyl esters are also readily hydrolyzed, but rates on arylamides are exceedingly low.. It carries out the reaction Release of an N-terminal amino acid, preferentially leucine, but not glutamic or aspartic acids.. In terms of biological role, presumably involved in the processing and regular turnover of intracellular proteins. Catalyzes the removal of unsubstituted N-terminal amino acids from various peptides. This Nitratidesulfovibrio vulgaris (strain ATCC 29579 / DSM 644 / CCUG 34227 / NCIMB 8303 / VKM B-1760 / Hildenborough) (Desulfovibrio vulgaris) protein is Probable cytosol aminopeptidase.